The following is an 87-amino-acid chain: Omega-lycotoxin-Am1d (87 aa).

An N-terminal signal peptide occupies residues 1–17; the sequence is MKLSIFFVLFFIAIAYC. The propeptide occupies 18 to 40; the sequence is QPEFLDDEEDEVEETLPVAEEGR. Intrachain disulfides connect Cys-44/Cys-59, Cys-51/Cys-64, Cys-58/Cys-84, and Cys-66/Cys-82.

It belongs to the neurotoxin omega-lctx family. Expressed by the venom gland.

It is found in the secreted. In terms of biological role, modulates Cav2.1/CACNA1A voltage-gated calcium channels (P/Q-type currents) in rat cerebellar Purkinje cells and hippocampal CA1-CA3 neurons. At saturating concentrations (&gt;10 nM) decelerates activation kinetics and slightly increases peak amplitude without affecting deactivation kinetics. In vivo, does not cause death when intravenously injected into mice. In rat models, through its activity on Cav2.1/CACNA1A, has an ameliorative effect on memory defects provoked by hyperstimulation of N-methyl-D-aspartate receptors (NMDARs) in the hippocampus. The polypeptide is Omega-lycotoxin-Am1d (Alopecosa marikovskyi (Wolf spider)).